The sequence spans 423 residues: Adenylosuccinate synthetase (423 aa).

GTP-binding positions include 11-17 and 39-41; these read GDEGKGK and GHT. Asp12 (proton acceptor) is an active-site residue. Mg(2+) contacts are provided by Asp12 and Gly39. Residues 12–15, 37–40, Thr129, Arg143, Asn219, Thr234, and Arg298 each bind IMP; these read DEGK and NAGH. His40 (proton donor) is an active-site residue. 294–300 lines the substrate pocket; the sequence is VTTGRRR. GTP is bound by residues Arg300, 326–328, and 411–413; these read KLD and GTG.

The protein belongs to the adenylosuccinate synthetase family. Homodimer. Mg(2+) is required as a cofactor.

The protein localises to the cytoplasm. It carries out the reaction IMP + L-aspartate + GTP = N(6)-(1,2-dicarboxyethyl)-AMP + GDP + phosphate + 2 H(+). The protein operates within purine metabolism; AMP biosynthesis via de novo pathway; AMP from IMP: step 1/2. Its function is as follows. Plays an important role in the de novo pathway and in the salvage pathway of purine nucleotide biosynthesis. Catalyzes the first committed step in the biosynthesis of AMP from IMP. The protein is Adenylosuccinate synthetase of Penicillium rubens (strain ATCC 28089 / DSM 1075 / NRRL 1951 / Wisconsin 54-1255) (Penicillium chrysogenum).